Here is a 380-residue protein sequence, read N- to C-terminus: MPNQLPADSVGLVTPQTLHFSEPLELACGISLNEYDLVYETYGQLNAAKSNAVLICHALSGHHHAAGYHRLEDKRPGWWDAYIGPGKPIDTNKFFVVALNNLGGCHGSTGPRSINPATGNVWGADFPMLRVRDWVASQARLADALGIDTWAAIIGGSLGGMQVMRWSIQYPQRVRYAVVIASAMKLSAQNIAFNEAARKAIISDPNFHNGDYLAHNTLPKNGLAVARMIGHITYLSDYAMGEKFGRDLRSGSFELGIAEPVEFQIESYLRYQGDSFAVSFDANSYIRITKALDYFDLAREYSDDPVLAFQGAQAKFLVVSFSTDWRFAPQRSREIVDALVGANKAVTYAEIESKHGHDAFLLPDARYEQVFKRYLASVEV.

Residues 51–362 (NAVLICHALS…SKHGHDAFLL (312 aa)) form the AB hydrolase-1 domain. Ser-157 acts as the Nucleophile in catalysis. Arg-227 provides a ligand contact to substrate. Active-site residues include Asp-324 and His-357. Asp-358 provides a ligand contact to substrate.

The protein belongs to the AB hydrolase superfamily. MetX family. As to quaternary structure, homodimer.

It is found in the cytoplasm. The enzyme catalyses L-homoserine + succinyl-CoA = O-succinyl-L-homoserine + CoA. Its pathway is amino-acid biosynthesis; L-methionine biosynthesis via de novo pathway; O-succinyl-L-homoserine from L-homoserine: step 1/1. In terms of biological role, transfers a succinyl group from succinyl-CoA to L-homoserine, forming succinyl-L-homoserine. The chain is Homoserine O-succinyltransferase from Cellvibrio japonicus (strain Ueda107) (Pseudomonas fluorescens subsp. cellulosa).